A 258-amino-acid chain; its full sequence is Large ribosomal subunit protein bL28m (258 aa).

A mitochondrion-targeting transit peptide spans 1–21 (MQKIFRPFQLTRGFTSSVKNF).

The protein belongs to the bacterial ribosomal protein bL28 family. In terms of assembly, component of the mitochondrial large ribosomal subunit (mt-LSU). Mature yeast 74S mitochondrial ribosomes consist of a small (37S) and a large (54S) subunit. The 37S small subunit contains a 15S ribosomal RNA (15S mt-rRNA) and 34 different proteins. The 54S large subunit contains a 21S rRNA (21S mt-rRNA) and 46 different proteins.

It is found in the mitochondrion. Its function is as follows. Component of the mitochondrial ribosome (mitoribosome), a dedicated translation machinery responsible for the synthesis of mitochondrial genome-encoded proteins, including at least some of the essential transmembrane subunits of the mitochondrial respiratory chain. The mitoribosomes are attached to the mitochondrial inner membrane and translation products are cotranslationally integrated into the membrane. The chain is Large ribosomal subunit protein bL28m (MRPL24) from Saccharomyces cerevisiae (strain ATCC 204508 / S288c) (Baker's yeast).